The primary structure comprises 214 residues: Probable nicotinate-nucleotide adenylyltransferase (214 aa).

The protein belongs to the NadD family.

The catalysed reaction is nicotinate beta-D-ribonucleotide + ATP + H(+) = deamido-NAD(+) + diphosphate. Its pathway is cofactor biosynthesis; NAD(+) biosynthesis; deamido-NAD(+) from nicotinate D-ribonucleotide: step 1/1. Catalyzes the reversible adenylation of nicotinate mononucleotide (NaMN) to nicotinic acid adenine dinucleotide (NaAD). The chain is Probable nicotinate-nucleotide adenylyltransferase from Aeromonas hydrophila subsp. hydrophila (strain ATCC 7966 / DSM 30187 / BCRC 13018 / CCUG 14551 / JCM 1027 / KCTC 2358 / NCIMB 9240 / NCTC 8049).